The following is a 111-amino-acid chain: Ribonuclease P protein component (111 aa).

This sequence belongs to the RnpA family. Consists of a catalytic RNA component (M1 or rnpB) and a protein subunit.

It catalyses the reaction Endonucleolytic cleavage of RNA, removing 5'-extranucleotides from tRNA precursor.. Functionally, RNaseP catalyzes the removal of the 5'-leader sequence from pre-tRNA to produce the mature 5'-terminus. It can also cleave other RNA substrates such as 4.5S RNA. The protein component plays an auxiliary but essential role in vivo by binding to the 5'-leader sequence and broadening the substrate specificity of the ribozyme. This Alkaliphilus metalliredigens (strain QYMF) protein is Ribonuclease P protein component.